Consider the following 80-residue polypeptide: Defensin-like protein 204 (80 aa).

The first 29 residues, Met1–Ala29, serve as a signal peptide directing secretion. Intrachain disulfides connect Cys43-Cys64, Cys48-Cys73, and Cys52-Cys75.

It belongs to the DEFL family.

It localises to the secreted. In Arabidopsis thaliana (Mouse-ear cress), this protein is Defensin-like protein 204.